The sequence spans 485 residues: MKEESILKKCDSSSIKHVPSTPLETNCPDKYNPKTWPIRLKVRNVIVISSMTFLNQYGDSVFAPSISNIAEQFHASRTLVTLGATLYTLGILFGNLIFAPLSEQFGRRPIYLIGYSVFALLQIPIALSVNLAMFLVFRFFSGLFGSVGLSNGSGSLADLFEKKDRGKYMVIYFTVLSIGPGIAPIISGFISQSSIGWQWEFWILLILSGFNLFWAFLLLKETYPPVLNRKKFEKYGEIGENEPVALRLTGKQLLIKLLILLSMKKPISILLSQPILICVACTIGSIYGMINLVLIAFSEVWKSSYDFSPGISGLMYISITLGLFSAVFIAMPINQKFYSYLVKRNGGEGEPEFRLPMGFIGITLFEIGILLFGWTARYKIFWFVPTIGSAIMGGGYIMTSNPLNMYVVDSYGIYSASASAGVKIFQLLFGAIFPLFAESLFRRLNYGWGCTLLAFILLACGCSLPILFKYGKQIRNLRPFDPSKY.

A run of 11 helical transmembrane segments spans residues 79-99 (LVTLGATLYTLGILFGNLIFA), 117-137 (VFALLQIPIALSVNLAMFLVF), 139-159 (FFSGLFGSVGLSNGSGSLADL), 170-190 (VIYFTVLSIGPGIAPIISGFI), 199-219 (WEFWILLILSGFNLFWAFLLL), 275-295 (ILICVACTIGSIYGMINLVLI), 313-333 (GLMYISITLGLFSAVFIAMPI), 355-375 (LPMGFIGITLFEIGILLFGWT), 380-400 (IFWFVPTIGSAIMGGGYIMTS), 421-441 (GVKIFQLLFGAIFPLFAESLF), and 448-468 (WGCTLLAFILLACGCSLPILF).

It belongs to the major facilitator superfamily. CAR1 family.

It localises to the membrane. This is an uncharacterized protein from Schizosaccharomyces pombe (strain 972 / ATCC 24843) (Fission yeast).